Consider the following 186-residue polypeptide: Oligoribonuclease (186 aa).

The region spanning 12 to 175 is the Exonuclease domain; that stretch reads LIWIDLEMTG…DDIKDSIKEL (164 aa). The active site involves Tyr133.

It belongs to the oligoribonuclease family.

Its subcellular location is the cytoplasm. 3'-to-5' exoribonuclease specific for small oligoribonucleotides. The protein is Oligoribonuclease of Wigglesworthia glossinidia brevipalpis.